A 499-amino-acid polypeptide reads, in one-letter code: Maturase K (499 aa).

Belongs to the intron maturase 2 family. MatK subfamily.

Its subcellular location is the plastid. The protein localises to the chloroplast. Usually encoded in the trnK tRNA gene intron. Probably assists in splicing its own and other chloroplast group II introns. In Neltuma juliflora (Mesquite), this protein is Maturase K.